A 100-amino-acid chain; its full sequence is Nucleoid-associated protein Rcas_2292 (100 aa).

The protein belongs to the YbaB/EbfC family. As to quaternary structure, homodimer.

The protein resides in the cytoplasm. The protein localises to the nucleoid. In terms of biological role, binds to DNA and alters its conformation. May be involved in regulation of gene expression, nucleoid organization and DNA protection. This Roseiflexus castenholzii (strain DSM 13941 / HLO8) protein is Nucleoid-associated protein Rcas_2292.